A 212-amino-acid polypeptide reads, in one-letter code: NAD(P)H-hydrate epimerase (212 aa).

The YjeF N-terminal domain maps to Met10–Leu212. Asn65–Asp69 provides a ligand contact to (6S)-NADPHX. Positions 66 and 129 each coordinate K(+). (6S)-NADPHX is bound by residues Gly133–Pro139 and Asp161. Ser164 is a binding site for K(+).

The protein belongs to the NnrE/AIBP family. K(+) is required as a cofactor.

The catalysed reaction is (6R)-NADHX = (6S)-NADHX. It catalyses the reaction (6R)-NADPHX = (6S)-NADPHX. In terms of biological role, catalyzes the epimerization of the S- and R-forms of NAD(P)HX, a damaged form of NAD(P)H that is a result of enzymatic or heat-dependent hydration. This is a prerequisite for the S-specific NAD(P)H-hydrate dehydratase to allow the repair of both epimers of NAD(P)HX. In Rhodobacter capsulatus (strain ATCC BAA-309 / NBRC 16581 / SB1003), this protein is NAD(P)H-hydrate epimerase.